The following is an 869-amino-acid chain: Bifunctional uridylyltransferase/uridylyl-removing enzyme (869 aa).

The interval 1–332 (MTATPADRPD…QFDGEAVPVQ (332 aa)) is uridylyltransferase. The segment at 333–691 (LDAGFSLRRG…RRAVPDNDAL (359 aa)) is uridylyl-removing. Residues 450 to 572 (VDQHTLMVLR…VGTRERLDYL (123 aa)) enclose the HD domain. 2 ACT domains span residues 692-771 (EVFV…PSRR) and 798-869 (RISL…LDPT).

The protein belongs to the GlnD family. It depends on Mg(2+) as a cofactor.

The enzyme catalyses [protein-PII]-L-tyrosine + UTP = [protein-PII]-uridylyl-L-tyrosine + diphosphate. It catalyses the reaction [protein-PII]-uridylyl-L-tyrosine + H2O = [protein-PII]-L-tyrosine + UMP + H(+). Uridylyltransferase (UTase) activity is inhibited by glutamine, while glutamine activates uridylyl-removing (UR) activity. Functionally, modifies, by uridylylation and deuridylylation, the PII regulatory proteins (GlnB and homologs), in response to the nitrogen status of the cell that GlnD senses through the glutamine level. Under low glutamine levels, catalyzes the conversion of the PII proteins and UTP to PII-UMP and PPi, while under higher glutamine levels, GlnD hydrolyzes PII-UMP to PII and UMP (deuridylylation). Thus, controls uridylylation state and activity of the PII proteins, and plays an important role in the regulation of nitrogen assimilation and metabolism. In Xanthomonas campestris pv. campestris (strain B100), this protein is Bifunctional uridylyltransferase/uridylyl-removing enzyme.